We begin with the raw amino-acid sequence, 648 residues long: NADP-dependent malic enzyme, chloroplastic (648 aa).

The N-terminal 61 residues, 1-61 (MISLNSSFLE…VDSAVRDVNA (61 aa)), are a transit peptide targeting the chloroplast. Tyr195 (proton donor) is an active-site residue. Arg248 contacts NAD(+). Lys266 functions as the Proton acceptor in the catalytic mechanism. Residues Glu339, Asp340, and Asp363 each contribute to the a divalent metal cation site. An NAD(+)-binding site is contributed by Asp363. 392 to 408 (LFLGAGEAGTGIAELIA) lines the NADP(+) pocket. Asn504 provides a ligand contact to NAD(+).

This sequence belongs to the malic enzymes family. As to quaternary structure, homotetramer. Mg(2+) is required as a cofactor. Requires Mn(2+) as cofactor.

The protein localises to the plastid. It is found in the chloroplast. The catalysed reaction is (S)-malate + NADP(+) = pyruvate + CO2 + NADPH. It catalyses the reaction oxaloacetate + H(+) = pyruvate + CO2. It functions in the pathway photosynthesis; C4 acid pathway. Functionally, the chloroplastic ME isoform decarboxylates malate shuttled from neighboring mesophyll cells. The CO(2) released is then refixed by ribulose-bisphosphate carboxylase. This pathway eliminates the photorespiratory loss of CO(2) that occurs in most plants. The chain is NADP-dependent malic enzyme, chloroplastic (MOD1) from Flaveria trinervia (Clustered yellowtops).